Consider the following 198-residue polypeptide: Ribonuclease HII (198 aa).

The RNase H type-2 domain maps to 6–195; the sequence is RRVAGVDEVG…VHHMLYQDKN (190 aa). Asp-12, Glu-13, and Asp-103 together coordinate a divalent metal cation.

Belongs to the RNase HII family. It depends on Mn(2+) as a cofactor. Requires Mg(2+) as cofactor.

It localises to the cytoplasm. It catalyses the reaction Endonucleolytic cleavage to 5'-phosphomonoester.. Functionally, endonuclease that specifically degrades the RNA of RNA-DNA hybrids. In Roseobacter denitrificans (strain ATCC 33942 / OCh 114) (Erythrobacter sp. (strain OCh 114)), this protein is Ribonuclease HII.